The primary structure comprises 121 residues: Oxalate-binding protein (121 aa).

Residues 49–117 (RMKLPPGSSV…GNTDLEFLAV (69 aa)) form the Cupin type-2 domain. Residues His-61, His-63, and Glu-68 each coordinate Mn(2+). Oxalate is bound at residue Tyr-70. Mn(2+) is bound at residue His-102.

As to quaternary structure, homodimer.

Functionally, binds oxalate. The protein is Oxalate-binding protein of Thermotoga maritima (strain ATCC 43589 / DSM 3109 / JCM 10099 / NBRC 100826 / MSB8).